Reading from the N-terminus, the 2213-residue chain is MATRSSRRESRLPFLFTLVALLPPGALCEVWTRTLHGGRAPLPQERGFRVVQGDPRELRLWERGDARGASRADEKPLRRRRSAALQPEPIKVYGQVSLNDSHNQMVVHWAGEKSNVIVALARDSLALARPRSSDVYVSYDYGKSFNKISEKLNFGAGNNTEAVVAQFYHSPADNKRYIFADAYAQYLWITFDFCNTIHGFSIPFRAADLLLHSKASNLLLGFDRSHPNKQLWKSDDFGQTWIMIQEHVKSFSWGIDPYDKPNTIYIERHEPSGYSTVFRSTDFFQSRENQEVILEEVRDFQLRDKYMFATKVVHLLGSPLQSSVQLWVSFGRKPMRAAQFVTRHPINEYYIADASEDQVFVCVSHSNNRTNLYISEAEGLKFSLSLENVLYYTPGGAGSDTLVRYFANEPFADFHRVEGLQGVYIATLINGSMNEENMRSVITFDKGGTWEFLQAPAFTGYGEKINCELSEGCSLHLAQRLSQLLNLQLRRMPILSKESAPGLIIATGSVGKNLASKTNVYISSSAGARWREALPGPHYYTWGDHGGIIMAIAQGMETNELKYSTNEGETWKAFTFSEKPVFVYGLLTEPGEKSTVFTIFGSNKENVHSWLILQVNATDALGVPCTENDYKLWSPSDERGNECLLGHKTVFKRRTPHATCFNGEDFDRPVVVSNCSCTREDYECDFGFRMSEDLALEVCVPDPGFSGKSSPPVPCPVGSTYRRSRGYRKISGDTCSGGDVEARLEGELVPCPLAEENEFILYATRKSIHRYDLASGTTEQLPLTGLRAAVALDFDYEHNCLYWSDLALDVIQRLCLNGSTGQEVIINSDLETVEALAFEPLSQLLYWVDAGFKKIEVANPDGDFRLTVVNSSVLDRPRALVLVPQEGIMFWTDWGDLKPGIYRSNMDGSAAYRLVSEDVKWPNGISVDDQWIYWTDAYLDCIERITFSGQQRSVILDRLPHPYAIAVFKNEIYWDDWSQLSIFRASKYSGSQMEILASQLTGLMDMKIFYKGKNTGSNACVPRPCSLLCLPRANNSKSCRCPDGVASSVLPSGDLMCDCPKGYELKNNTCVKEEDTCLRNQYRCSNGNCINSIWWCDFDNDCGDMSDEKNCPTTICDLDTQFRCQESGTCIPLSYKCDLEDDCGDNSDERHCEMHQCRSDEYNCSSGMCIRSSWVCDGDNDCRDWSDEANCTAIYHTCEASNFQCRNGHCIPQRWACDGDADCQDGSDEDPANCEKKCNGFRCPNGTCIPSTKHCDGLHDCSDGSDEQHCEPLCTRFMDFVCKNRQQCLFHSMVCDGIIQCRDGSDEDPAFAGCSRDPEFHKVCDEFGFQCQNGVCISLIWKCDGMDDCGDYSDEANCENPTEAPNCSRYFQFRCDNGHCIPNRWKCDRENDCGDWSDEKDCGDSHVLPSTTPAPSTCLPNYYRCGGGACVIDTWVCDGYRDCADGSDEEACPSLPNVTATSSPSQPGRCDRFEFECHQPKKCIPNWRRCDGHQDCQDGQDEANCPTHSTLTCMSWEFKCEDGEACIVLSERCDGFLDCSDESDEKACSDELTVYKVQNLQWTADFSGNVTLTWMRPKKMPSAACVYNVYYRVVGESIWKTLETHSNKTNTVLKVLKPDTTYQVKVQVQCLSKVHNTNDFVTLRTPEGLPDAPQNLQLSLHGEEEGVIVGHWSPPTHTHGLIREYIVEYSRSGSKVWTSERAASNFTEIKNLLVNTLYTVRVAAVTSRGIGNWSDSKSITTVKGKAIPPPNIHIDNYDENSLSFTLTVDGNIKVNGYVVNLFWAFDTHKQEKKTMNFQGSSVSHKVGNLTAQTAYEISAWAKTDLGDSPLSFEHVTTRGVRPPAPSLKARAINQTAVECTWTGPRNVVYGIFYATSFLDLYRNPSSLTTPLHNATVLVGKDEQYLFLVRVVMPYQGPSSDYVVVKMIPDSRLPPRHLHAVHTGKTSAVIKWESPYDSPDQDLFYAIAVKDLIRKTDRSYKVKSRNSTVEYTLSKLEPGGKYHVIVQLGNMSKDASVKITTVSLSAPDALKIITENDHVLLFWKSLALKEKYFNESRGYEIHMFDSAMNITAYLGNTTDNFFKISNLKMGHNYTFTVQARCLLGSQICGEPAVLLYDELGSGGDASAMQAARSTDVAAVVVPILFLILLSLGVGFAILYTKHRRLQSSFTAFANSHYSSRLGSAIFSSGDDLGEDDEDAPMITGFSDDVPMVIA.

The first 28 residues, 1-28 (MATRSSRRESRLPFLFTLVALLPPGALC), serve as a signal peptide directing secretion. The propeptide at 29 to 81 (EVWTRTLHGGRAPLPQERGFRVVQGDPRELRLWERGDARGASRADEKPLRRRR) is removed in mature form. Positions 63-65 (RGD) match the Cell attachment site motif. The Lumenal segment spans residues 82-2136 (SAALQPEPIK…MQAARSTDVA (2055 aa)). N-linked (GlcNAc...) asparagine glycosylation occurs at Asn-99. Ser-114 is subject to Phosphoserine. The stretch at 136–147 (YVSYDYGKSFNK) is one BNR 1 repeat. N-linked (GlcNAc...) asparagine glycosylation occurs at Asn-158. One copy of the BNR 2 repeat lies at 232-243 (WKSDDFGQTWIM). Residues Asn-368 and Asn-430 are each glycosylated (N-linked (GlcNAc...) asparagine). BNR repeat units lie at residues 441–452 (VITFDKGGTWEF), 521–532 (YISSSAGARWRE), and 562–573 (KYSTNEGETWKA). Asn-616, Asn-674, Asn-817, and Asn-870 each carry an N-linked (GlcNAc...) asparagine glycan. 5 LDL-receptor class B repeats span residues 799–842 (NCLY…EPLS), 843–886 (QLLY…VPQE), 887–929 (GIMF…SVDD), 930–971 (QWIY…FKNE), and 972–1012 (IYWD…FYKG). The EGF-like domain maps to 1025 to 1071 (CSLLCLPRANNSKSCRCPDGVASSVLPSGDLMCDCPKGYELKNNTCV). N-linked (GlcNAc...) asparagine glycosylation is found at Asn-1034 and Asn-1067. 9 consecutive LDL-receptor class A domains span residues 1075–1113 (DTCL…NCPT), 1114–1154 (TICD…HCEM), 1155–1193 (HQCR…NCTA), 1196–1235 (HTCE…ANCE), 1237–1271 (KCNG…QHCE), 1272–1316 (PLCT…GCSR), 1322–1360 (KVCD…NCEN), 1365–1404 (PNCS…DCGD), and 1416–1454 (STCL…ACPS). 21 disulfides stabilise this stretch: Cys-1077–Cys-1089, Cys-1084–Cys-1102, Cys-1096–Cys-1111, Cys-1116–Cys-1130, Cys-1124–Cys-1143, Cys-1137–Cys-1152, Cys-1157–Cys-1169, Cys-1164–Cys-1182, Cys-1176–Cys-1191, Cys-1198–Cys-1210, Cys-1205–Cys-1223, Cys-1217–Cys-1234, Cys-1238–Cys-1248, Cys-1243–Cys-1261, Cys-1255–Cys-1270, Cys-1274–Cys-1288, Cys-1282–Cys-1301, Cys-1295–Cys-1314, Cys-1324–Cys-1336, Cys-1331–Cys-1349, and Cys-1343–Cys-1358. Residue Asn-1163 is glycosylated (N-linked (GlcNAc...) asparagine). N-linked (GlcNAc...) asparagine glycosylation is present at Asn-1190. Asn-1245 carries an N-linked (GlcNAc...) asparagine glycan. An N-linked (GlcNAc...) asparagine glycan is attached at Asn-1366. 6 disulfide bridges follow: Cys-1367/Cys-1380, Cys-1375/Cys-1393, Cys-1387/Cys-1402, Cys-1418/Cys-1430, Cys-1425/Cys-1443, and Cys-1437/Cys-1452. N-linked (GlcNAc...) asparagine glycosylation occurs at Asn-1457. LDL-receptor class A domains are found at residues 1468-1507 (GRCD…NCPT) and 1511-1550 (LTCM…ACSD). Disulfide bonds link Cys-1470–Cys-1483, Cys-1477–Cys-1496, Cys-1490–Cys-1505, Cys-1513–Cys-1526, Cys-1520–Cys-1539, and Cys-1533–Cys-1548. 6 Fibronectin type-III domains span residues 1556–1648 (KVQN…TPEG), 1652–1744 (APQN…TVKG), 1748–1843 (PPPN…VRPP), 1842–1926 (PPAP…VVKM), 1933–2028 (PPRH…APDA), and 2029–2117 (LKII…LYDE). Asn-1569, Asn-1607, Asn-1705, Asn-1732, Asn-1808, Asn-1853, Asn-1893, Asn-1985, Asn-2009, Asn-2053, Asn-2068, Asn-2075, and Asn-2091 each carry an N-linked (GlcNAc...) asparagine glycan. The chain crosses the membrane as a helical span at residues 2137 to 2157 (AVVVPILFLILLSLGVGFAIL). Residues 2158–2213 (YTKHRRLQSSFTAFANSHYSSRLGSAIFSSGDDLGEDDEDAPMITGFSDDVPMVIA) lie on the Cytoplasmic side of the membrane. The short motif at 2160-2163 (KHRR) is the Potential nuclear localization signal for the C-terminal fragment generated by PSEN1 element. The Endocytosis signal signature appears at 2171-2176 (FANSHY). Residues 2189 to 2213 (DDLGEDDEDAPMITGFSDDVPMVIA) form a required for efficient Golgi apparatus - endosome sorting region. Residues 2200–2213 (MITGFSDDVPMVIA) form a required for interaction with GGA1 and GGA2 region. Phosphoserine; by ROCK2 is present on Ser-2205. The short motif at 2207–2211 (DVPMV) is the DXXLL motif involved in the interaction with GGA1 element.

It belongs to the VPS10-related sortilin family. SORL1 subfamily. In terms of assembly, after maturation cleavage, interacts (via N-terminus) with its own propeptide; this interaction prevents interaction with other ligands, including CRLF1, GDNF, GFRA1, IL6 and IL6R. Interacts (via N-terminal ectodomain) with APP, forming a 1:1 stoichiometric complex; this interaction retains APP in the trans-Golgi network and reduces processing into soluble APP-alpha and amyloid-beta peptides. Also interacts with APP C-terminal fragment C99 and with Abeta40. Interacts with beta-secretase BACE1/BACE; this interaction may affect BACE1-binding to APP and hence reduce BACE1-dependent APP cleavage. Interacts with LRPAP1/RAP. Interacts (via C-terminal cytosolic domain) with GGA1 and GGA2 (via N-terminal VHS domain). Interacts with PACS1. May interact (via the N-terminal ectodomain) with the morphogenetic neuropeptide, also called head activator or HA; this interaction is impaired in the presence of propeptide. Interacts with neurotensin/NTS. Interacts (via the N-terminal ectodomain) with PDGFB homodimer. Interacts (via N-terminal ectodomain) with the uPA receptor PLAUR. Interacts with uPA/PLAU and PAI1/SERPINE1, either individually or in complex with each other, leading to endocytosis. Also interacts with PAI1/SERPINE1 in complex with tPA/PLAT. Interacts (via C-terminus) with AP-1 and AP-2 complexes. Interacts with BMPR1A and BMPR1B. Interacts with lipoprotein lipase LPL; this interaction is optimal in slightly acidic conditions. Interacts (via N-terminal ectodomain) with GDNF (via propeptide) and GDNF receptor alpha-1/GFRA1, either individually or in complex with each other. The interaction with GDNF occurs mostly intracellularly. Also interacts with other GDNF receptor alpha family members, including GFRA2, GFRA3 and GFRA4. Interacts with the insulin receptor INSR; this interaction strongly increases the surface exposure of INSR. Interacts (via cytosolic C-terminus) with STK39/SPAK. Interacts (via N-terminal ectodomain) with the heterodimeric complex CRLF1-CLC; within this complex, the interaction is mediated predominantly by the CRLF1 moiety. Interacts with CNTFR, as well as with the tripartite signaling complex formed by CRLF1, CLC and CNTFR. Interacts (via N-terminal ectodomain) with IL6; this interaction leads to IL6 internalization and lysosomal degradation. Binding of SOLRL1 secreted N-terminal ectodomain to IL6 may increase IL6 trans signaling. Interacts with secreted IL6R; this interaction leads to IL6R internalization. Also interacts with transmembrane IL6R; this interaction does not affect subcellular location. Interacts with APOE. Interacts with apolipoprotein E-rich beta-VLDL. Interacts with APOA5; this interaction leads to APOA5 internalization and is abolished by heparin. Interaction with APOA5 results in enhanced binding to chylomicrons. Interacts with ROCK2. Interacts (via cytosolic C-terminus) with PPP3CB/calcineurin A beta. Interacts with NTRK2/TRKB; this interaction facilitates NTRK2 trafficking between synaptic plasma membranes, postsynaptic densities and cell soma, hence positively regulates BDNF signaling. Interacts (via cytosolic C-terminus) with HSPA12A in an ADP-dependent manner; this interaction affects SORL1 internalization and subcellular localization. Interacts (via N-terminal ectodomain) with ERBB2/HER2. Post-translationally, within the Golgi apparatus, the propeptide may be cleaved off by FURIN or a furin-like protease. After cleavage, the propeptide interacts with the mature protein N-terminus, preventing the association with other ligands. At the cell surface, partially subjected to proteolytic shedding that releases the ectodomain in the extracellular milieu. The shedding may be catalyzed by ADAM17/TACE. Following shedding, PSEN1/presenilin-1 cleaves the remaining transmembrane fragment and catalyzes the release of a C-terminal fragment in the cytosol and of a soluble N-terminal beta fragment in the extracellular milieu. The C-terminal cytosolic fragment localizes to the nucleus. In terms of processing, phosphorylation at Ser-2205 facilitates the interaction with GGA1. As to expression, expressed in brain, in particular the hippocampus, dentate gyrus, and cerebral cortex (at protein level). Also detected in liver, adrenal glands, pancreas and testis. Expressed in smooth muscle cells, predominantly during proliferation.

Its subcellular location is the golgi apparatus membrane. The protein localises to the golgi apparatus. It localises to the trans-Golgi network membrane. The protein resides in the endosome membrane. It is found in the early endosome membrane. Its subcellular location is the recycling endosome membrane. The protein localises to the endoplasmic reticulum membrane. It localises to the endosome. The protein resides in the multivesicular body membrane. It is found in the cell membrane. Its subcellular location is the cytoplasmic vesicle. The protein localises to the secretory vesicle membrane. It localises to the secreted. In terms of biological role, sorting receptor that directs several proteins to their correct location within the cell. Along with AP-1 complex, involved Golgi apparatus - endosome sorting. Sorting receptor for APP, regulating its intracellular trafficking and processing into amyloidogenic-beta peptides. Retains APP in the trans-Golgi network, hence preventing its transit through late endosomes where amyloid beta peptides Abeta40 and Abeta42 are generated. May also sort newly produced amyloid-beta peptides to lysosomes for catabolism. Does not affect APP trafficking from the endoplasmic reticulum to Golgi compartments. Sorting receptor for the BDNF receptor NTRK2/TRKB that facilitates NTRK2 trafficking between synaptic plasma membranes, postsynaptic densities and cell soma, hence positively regulates BDNF signaling by controlling the intracellular location of its receptor. Sorting receptor for GDNF that promotes GDNF regulated, but not constitutive secretion. Sorting receptor for the GDNF-GFRA1 complex, directing it from the cell surface to endosomes. GDNF is then targeted to lysosomes and degraded, while its receptor GFRA1 recycles back to the cell membrane, resulting in a GDNF clearance pathway. The SORL1-GFRA1 complex further targets RET for endocytosis, but not for degradation, affecting GDNF-induced neurotrophic activities. Sorting receptor for ERBB2/HER2. Regulates ERBB2 subcellular distribution by promoting its recycling after internalization from endosomes back to the plasma membrane, hence stimulating phosphoinositide 3-kinase (PI3K)-dependent ERBB2 signaling. Sorting receptor for lipoprotein lipase LPL. Promotes LPL localization to endosomes and later to the lysosomes, leading to degradation of newly synthesized LPL. Potential sorting receptor for APOA5, inducing APOA5 internalization to early endosomes, then to late endosomes, wherefrom a portion is sent to lysosomes and degradation, another portion is sorted to the trans-Golgi network. Sorting receptor for the insulin receptor INSR. Promotes recycling of internalized INSR via the Golgi apparatus back to the cell surface, thereby preventing lysosomal INSR catabolism, increasing INSR cell surface expression and strengthening insulin signal reception in adipose tissue. Does not affect INSR internalization. Plays a role in renal ion homeostasis, controlling the phospho-regulation of SLC12A1/NKCC2 by STK39/SPAK kinase and PPP3CB/calcineurin A beta phosphatase, possibly through intracellular sorting of STK39 and PPP3CB. Stimulates, via the N-terminal ectodomain, the proliferation and migration of smooth muscle cells, possibly by increasing cell surface expression of the urokinase receptor uPAR/PLAUR. This may promote extracellular matrix proteolysis and hence facilitate cell migration. By acting on the migration of intimal smooth muscle cells, may accelerate intimal thickening following vascular injury. Promotes adhesion of monocytes. Stimulates proliferation and migration of monocytes/macrophages. Through its action on intimal smooth muscle cells and macrophages, may accelerate intimal thickening and macrophage foam cell formation in the process of atherosclerosis. Regulates hypoxia-enhanced adhesion of hematopoietic stem and progenitor cells to the bone marrow stromal cells via a PLAUR-mediated pathway. This function is mediated by the N-terminal ectodomain. Metabolic regulator, which functions to maintain the adequate balance between lipid storage and oxidation in response to changing environmental conditions, such as temperature and diet. The N-terminal ectodomain negatively regulates adipose tissue energy expenditure, acting through the inhibition the BMP/Smad pathway. May regulate signaling by the heterodimeric neurotrophic cytokine CLCF1-CRLF1 bound to the CNTFR receptor by promoting the endocytosis of the tripartite complex CLCF1-CRLF1-CNTFR and lysosomal degradation. May regulate IL6 signaling, decreasing cis signaling, possibly by interfering with IL6-binding to membrane-bound IL6R, while up-regulating trans signaling via soluble IL6R. This is Sortilin-related receptor (SORL1) from Oryctolagus cuniculus (Rabbit).